The primary structure comprises 264 residues: uncharacterized protein (264 aa).

A signal peptide spans 1–16 (MKGKSALTLLLAGIFS). Cys17 is lipidated: N-palmitoyl cysteine. Residue Cys17 is the site of S-diacylglycerol cysteine attachment.

It localises to the cell inner membrane. This is an uncharacterized protein from Escherichia coli (strain K12).